Reading from the N-terminus, the 447-residue chain is MAGVGGGNDFQWCFSQVKGAIDEDVAEADIISTVEFNYSGELLATGDKGGRVVIFQREQESKNRPLSRGEYNVYSTFQSHEPEFDYLKSLEIEEKINKIRWLPQQNAAHFLLSTNDKTIKLWKISERDKRAEGYNLKDEDGRLRDPFRITSLRVPVLMPMDLMVEASPRRIFANAHTYHINSISVNSDYETYLSADDLRINLWHLEITDRSFNIVDIKPANMEELTEVITAAECHPHQCNVFVYSSSKGTIRLCDMRAAALCDRHSKFFEEPEDPSSRSFFSEIISSISDVKFSHSGRYMMTRDYLSVKVWDLNMENRPVETYQVHEYLRSKLCSLYENDCIFDKFECCWNGSDSAIMTGSYNNFFRMFDRNTRRDITLEASRESSKPRAMLKPRKVCTGGKRKKDEISVDSLDFNKKILHTAWHPKENVIAVAATNNLYIFQDKMN.

WD repeat units follow at residues 26-65 (AEADIISTVEFNYSGELLATGDKGGRVVIFQREQESKNRP), 91-132 (EIEE…KRAE), 175-213 (AHTYHINSISVNSDYETYLSADDLRINLWHLEITDRSFN), 224-264 (ELTE…LCDR), 283-321 (EIISSISDVKFSHSGRYMMTRDYLSVKVWDLNMENRPVE), 338-379 (ENDC…DITL), and 414-447 (DFNKKILHTAWHPKENVIAVAATNNLYIFQDKMN).

It belongs to the phosphatase 2A regulatory subunit B family. PP2A consists of a common heterodimeric core enzyme, composed of a 36 kDa catalytic subunit (subunit C) and a 65 kDa constant regulatory subunit (PR65 or subunit A), that associates with a variety of regulatory subunits.

Its subcellular location is the cytoplasm. Functionally, substrate-recognition subunit of protein phosphatase 2A (PP2A) that plays a key role in cell cycle by controlling mitosis entry and exit. The activity of PP2A complexes containing PPP2R2D (PR55-delta) fluctuate during the cell cycle: the activity is high in interphase and low in mitosis. The chain is Serine/threonine-protein phosphatase 2A 55 kDa regulatory subunit B delta isoform (ppp2r2d) from Danio rerio (Zebrafish).